The following is a 443-amino-acid chain: Transcriptional regulatory protein ZraR (443 aa).

The region spanning 7-121 is the Response regulatory domain; the sequence is DILVVDDDIS…KLQLTLSEAL (115 aa). 4-aspartylphosphate is present on Asp56. Residues 141–370 form the Sigma-54 factor interaction domain; the sequence is MVGDSPAMRA…LENAVERAVV (230 aa). Positions 172, 173, 329, and 359 each coordinate ATP. A DNA-binding region (H-T-H motif) is located at residues 423 to 442; that stretch reads KTEAARRLGITRKTLLAKLS.

In terms of processing, phosphorylated by ZraS.

Its subcellular location is the cytoplasm. Activity of the ZraS/ZraR two-component system is repressed by the zinc-bound form of ZraP, which probably interacts with the periplasmic region of ZraS. Functionally, part of the Zra signaling pathway, an envelope stress response (ESR) system composed of the periplasmic accessory protein ZraP, the histidine kinase ZraS and the transcriptional regulator ZraR. The ZraPSR system contributes to antibiotic resistance and is important for membrane integrity in the presence of membrane-targeting biocides. ZraR is a member of the two-component regulatory system ZraS/ZraR. When activated by ZraS, acts in conjunction with sigma-54 to regulate the expression of zraP in the presence of high Zn(2+) or Pb(2+) concentrations. Also positively autoregulates the expression of the zraSR operon. This Klebsiella oxytoca protein is Transcriptional regulatory protein ZraR (zraR).